The primary structure comprises 97 residues: Acylphosphatase (97 aa).

The Acylphosphatase-like domain occupies 9–97 (RKHIVVTGLV…ETARAFGVRQ (89 aa)). Active-site residues include Arg24 and Asn42.

This sequence belongs to the acylphosphatase family.

It carries out the reaction an acyl phosphate + H2O = a carboxylate + phosphate + H(+). The chain is Acylphosphatase (acyP) from Bifidobacterium longum (strain NCC 2705).